The chain runs to 125 residues: uncharacterized protein (125 aa).

The next 2 membrane-spanning stretches (helical) occupy residues 28–48 and 54–74; these read VFIT…SQFC and FFLP…LFFF.

The protein localises to the membrane. This is an uncharacterized protein from Saccharomyces cerevisiae (strain ATCC 204508 / S288c) (Baker's yeast).